The chain runs to 456 residues: Protein COBRA (456 aa).

Residues 1–36 form the signal peptide; sequence MESFFSRSTSIVSKLSFLALWIVFLISSSSFTSTEA. Asn-45, Asn-170, Asn-178, Asn-217, Asn-242, Asn-258, Asn-328, Asn-343, and Asn-362 each carry an N-linked (GlcNAc...) asparagine glycan. The GPI-anchor amidated asparagine moiety is linked to residue Asn-431. A propeptide spans 432 to 456 (removed in mature form); that stretch reads GGSRSQFSFVAAVLLPLLVFFFFSA.

Belongs to the COBRA family. Expressed in roots, stems, leaves, flowers and siliques. Up-regulated in the root zone of rapid longitudinal expansion.

The protein localises to the lateral cell membrane. Its function is as follows. Involved in determining the orientation of cell expansion, probably by playing an important role in cellulose deposition. May act by recruiting cellulose synthesizing complexes to discrete positions on the cell surface. The chain is Protein COBRA (COB) from Arabidopsis thaliana (Mouse-ear cress).